The following is a 429-amino-acid chain: 3-phosphoshikimate 1-carboxyvinyltransferase (429 aa).

3-phosphoshikimate-binding residues include K20, S21, and R25. K20 serves as a coordination point for phosphoenolpyruvate. Positions 89 and 118 each coordinate phosphoenolpyruvate. The 3-phosphoshikimate site is built by S164, S165, Q166, S192, D311, and K338. Position 166 (Q166) interacts with phosphoenolpyruvate. D311 functions as the Proton acceptor in the catalytic mechanism. Phosphoenolpyruvate is bound by residues R342 and R384.

The protein belongs to the EPSP synthase family. In terms of assembly, monomer.

The protein resides in the cytoplasm. The enzyme catalyses 3-phosphoshikimate + phosphoenolpyruvate = 5-O-(1-carboxyvinyl)-3-phosphoshikimate + phosphate. It participates in metabolic intermediate biosynthesis; chorismate biosynthesis. Its function is as follows. Catalyzes the transfer of the enolpyruvyl moiety of phosphoenolpyruvate (PEP) to the 5-hydroxyl of shikimate-3-phosphate (S3P) to produce enolpyruvyl shikimate-3-phosphate and inorganic phosphate. The protein is 3-phosphoshikimate 1-carboxyvinyltransferase of Methanococcus maripaludis (strain C6 / ATCC BAA-1332).